The primary structure comprises 429 residues: 3-phosphoshikimate 1-carboxyvinyltransferase (429 aa).

Residues Lys-23, Ser-24, and Arg-28 each contribute to the 3-phosphoshikimate site. Phosphoenolpyruvate is bound at residue Lys-23. Residues Gly-95 and Arg-123 each coordinate phosphoenolpyruvate. Residues Ser-168, Gln-170, Asp-316, and Lys-343 each contribute to the 3-phosphoshikimate site. Gln-170 contributes to the phosphoenolpyruvate binding site. Asp-316 serves as the catalytic Proton acceptor. Arg-347 and Arg-389 together coordinate phosphoenolpyruvate.

It belongs to the EPSP synthase family. Monomer.

The protein resides in the cytoplasm. It catalyses the reaction 3-phosphoshikimate + phosphoenolpyruvate = 5-O-(1-carboxyvinyl)-3-phosphoshikimate + phosphate. It functions in the pathway metabolic intermediate biosynthesis; chorismate biosynthesis; chorismate from D-erythrose 4-phosphate and phosphoenolpyruvate: step 6/7. Its function is as follows. Catalyzes the transfer of the enolpyruvyl moiety of phosphoenolpyruvate (PEP) to the 5-hydroxyl of shikimate-3-phosphate (S3P) to produce enolpyruvyl shikimate-3-phosphate and inorganic phosphate. The protein is 3-phosphoshikimate 1-carboxyvinyltransferase of Bacillus cereus (strain 03BB102).